Here is a 259-residue protein sequence, read N- to C-terminus: Probable ABC transporter permease protein RT0041 (259 aa).

The next 5 helical transmembrane spans lie at Val20–Tyr40, Leu49–Val69, Val148–Met168, Leu195–Ile215, and Ala237–Phe257.

The protein belongs to the MlaE permease family.

It is found in the cell inner membrane. Could be part of an ABC transporter complex. This is Probable ABC transporter permease protein RT0041 from Rickettsia typhi (strain ATCC VR-144 / Wilmington).